The sequence spans 361 residues: Homeobox protein knotted-1-like 6 (361 aa).

Positions 11–48 are disordered; it reads VGASGVHGGHQHQHHHHPWGSSLSAIVAPPPPPQLQQQ. Residues 19-28 show a composition bias toward basic residues; the sequence is GHQHQHHHHP. The 21-residue stretch at 242–262 folds into the ELK domain; it reads ELKHHLLKKYSGYLSSLKQEL. The homeobox; TALE-type DNA-binding region spans 263-326; it reads SKKKKKGKLP…NQRKRHWKPS (64 aa).

It belongs to the TALE/KNOX homeobox family. As to quaternary structure, interacts with FTIP7. Expressed predominantly in shoot apices. Also found to a lesser extent in glumes.

Its subcellular location is the nucleus. It is found in the cytoplasm. In terms of biological role, transcription factor that regulates genes involved in development. May be involved in shoot formation during embryogenesis. Overexpression in transgenic plants causes altered leaf morphology. Regulates anther dehiscence via direct repression of the auxin biosynthetic gene YUCCA4. Binds to the DNA sequence 5'-TGAC-3' in the promoter of the YUCCA4 gene and represses its activity during anther development. Reduction of auxin levels at late stage of anther development, after meiosis of microspore mother cells, is necessary for normal anther dehiscence and seed setting. The protein is Homeobox protein knotted-1-like 6 (OSH1) of Oryza sativa subsp. japonica (Rice).